A 331-amino-acid polypeptide reads, in one-letter code: Ornithine carbamoyltransferase (331 aa).

Carbamoyl phosphate is bound by residues 55-58 (STRT), Q82, R106, and 133-136 (HPTQ). L-ornithine contacts are provided by residues N166, D230, and 234 to 235 (SM). Residues 272–273 (CL) and R317 contribute to the carbamoyl phosphate site.

The protein belongs to the aspartate/ornithine carbamoyltransferase superfamily. OTCase family.

It is found in the cytoplasm. It catalyses the reaction carbamoyl phosphate + L-ornithine = L-citrulline + phosphate + H(+). The protein operates within amino-acid biosynthesis; L-arginine biosynthesis; L-arginine from L-ornithine and carbamoyl phosphate: step 1/3. Its function is as follows. Reversibly catalyzes the transfer of the carbamoyl group from carbamoyl phosphate (CP) to the N(epsilon) atom of ornithine (ORN) to produce L-citrulline. This is Ornithine carbamoyltransferase (argF) from Neisseria meningitidis serogroup B (strain ATCC BAA-335 / MC58).